Reading from the N-terminus, the 242-residue chain is ATP synthase subunit a (242 aa).

6 helical membrane-spanning segments follow: residues 29 to 49, 84 to 104, 114 to 134, 140 to 160, 181 to 201, and 203 to 223; these read SSIY…LAFY, FIPL…LGMT, IIVT…VGFV, FLTL…MIVI, MAGH…MIYL, and FLPI…AILQ.

This sequence belongs to the ATPase A chain family. In terms of assembly, F-type ATPases have 2 components, CF(1) - the catalytic core - and CF(0) - the membrane proton channel. CF(1) has five subunits: alpha(3), beta(3), gamma(1), delta(1), epsilon(1). CF(0) has three main subunits: a(1), b(2) and c(9-12). The alpha and beta chains form an alternating ring which encloses part of the gamma chain. CF(1) is attached to CF(0) by a central stalk formed by the gamma and epsilon chains, while a peripheral stalk is formed by the delta and b chains.

Its subcellular location is the cell inner membrane. Functionally, key component of the proton channel; it plays a direct role in the translocation of protons across the membrane. The chain is ATP synthase subunit a from Rickettsia akari (strain Hartford).